Consider the following 459-residue polypeptide: Proton-coupled folate transporter (459 aa).

Methionine 1 carries the post-translational modification N-acetylmethionine. At 1–25 (MEGRANSPGEPRAWPTRSVLCRGCV) the chain is on the cytoplasmic side. Residues 26–44 (EPLVFLANFALVLQGPVTT) form a helical membrane-spanning segment. Residues 45 to 82 (QYLWHRFSADLGYNGTRHRDSCSNHSVDPIAQEVETLT) lie on the Extracellular side of the membrane. N-linked (GlcNAc...) asparagine glycosylation is found at asparagine 58 and asparagine 68. A disulfide bond links cysteine 66 and cysteine 298. The chain crosses the membrane as a helical span at residues 83 to 108 (SHWTLYMNVGGFLVGLFSSTLLGAWS). Residues 109 to 112 (DCVG) are Cytoplasmic-facing. Residues 113 to 135 (RRPLLVLASLGLLLQTVLSIFVV) traverse the membrane as a helical segment. Topologically, residues 136–140 (QLHLH) are extracellular. A helical transmembrane segment spans residues 141–154 (IGYLVLGRILCALL). The Cytoplasmic portion of the chain corresponds to 155-177 (GDFSGLLAASFASVADVSSSRTR). Residues aspartate 156 and glutamate 185 each coordinate H(+). A helical transmembrane segment spans residues 178-203 (TIRMALLEACIGVAGMLASFIGGFLL). The Extracellular segment spans residues 204–208 (QEQVY). The helical transmembrane segment at 209–227 (VNPFWLALAVLTVMTLYAA) threads the bilayer. Residues 228 to 266 (FCFGETVKERTPTRLFTLRHHRSVIQLYVTQAPEKSRKH) lie on the Cytoplasmic side of the membrane. Residues 267-289 (LALYSLAIFVMITVHLGAQDILT) form a helical membrane-spanning segment. Histidine 281 provides a ligand contact to H(+). At 290 to 302 (LYELSAPLCWDSR) the chain is on the extracellular side. A helical membrane pass occupies residues 303-325 (LISYGSAAQQLPYLTSLLGLRLL). Over 326 to 331 (QYCLAD) the chain is Cytoplasmic. The helical transmembrane segment at 332-351 (TWVAEIGLVFNILGMMVFAF) threads the bilayer. Topologically, residues 352 to 355 (ATIT) are extracellular. Residues 356-376 (PLMFTGYGLLFLSLVVTPIIR) form a helical membrane-spanning segment. The Cytoplasmic segment spans residues 377-388 (AKLSRLVRQSEQ). A helical transmembrane segment spans residues 389-414 (GALFSALACVNGLAMLMASGIFNSLY). The Extracellular portion of the chain corresponds to 415 to 422 (PATLNLMK). The chain crosses the membrane as a helical span at residues 423-441 (GFPFLLAAGLLFIPAILMG). Topologically, residues 442 to 459 (ILERDNHCPEFQEFSQSP) are cytoplasmic. Position 458 is a phosphoserine (serine 458).

Belongs to the major facilitator superfamily. SLC46A family. As to quaternary structure, monomer. In terms of tissue distribution, expressed in retina and retinal pigment epithelium.

It localises to the cell membrane. The protein resides in the apical cell membrane. It is found in the basolateral cell membrane. Its subcellular location is the endosome membrane. The protein localises to the cytoplasm. The catalysed reaction is folate(in) + H(+)(in) = folate(out) + H(+)(out). It carries out the reaction (6S)-5-methyl-5,6,7,8-tetrahydrofolate(in) + H(+)(in) = (6S)-5-methyl-5,6,7,8-tetrahydrofolate(out) + H(+)(out). It catalyses the reaction methotrexate(in) + H(+)(in) = methotrexate(out) + H(+)(out). The enzyme catalyses pemetrexed(in) + H(+)(in) = pemetrexed(out) + H(+)(out). In terms of biological role, proton-coupled folate symporter that mediates folate absorption using an H(+) gradient as a driving force. Involved in the intestinal absorption of folates at the brush-border membrane of the proximal jejunum, and the transport from blood to cerebrospinal fluid across the choroid plexus. Functions at acidic pH via alternate outward- and inward-open conformation states. Protonation of residues in the outward open state primes the protein for transport. Binding of folate promotes breaking of salt bridge network and subsequent closure of the extracellular gate, leading to the inward-open state and release of protons and folate. Also able to transport antifolate drugs, such as methotrexate and pemetrexed. Involved in FOLR1-mediated endocytosis by serving as a route of export of folates from acidified endosomes. Also acts as a lower-affinity, pH-independent heme carrier protein and constitutes the main importer of heme in the intestine. Imports heme in the retina and retinal pigment epithelium, in neurons of the hippocampus, in hepatocytes and in the renal epithelial cells. Hence, participates in the trafficking of heme and increases intracellular iron content. This chain is Proton-coupled folate transporter, found in Bos taurus (Bovine).